Consider the following 129-residue polypeptide: Small ribosomal subunit protein uS11 (129 aa).

The protein belongs to the universal ribosomal protein uS11 family. Part of the 30S ribosomal subunit. Interacts with proteins S7 and S18. Binds to IF-3.

In terms of biological role, located on the platform of the 30S subunit, it bridges several disparate RNA helices of the 16S rRNA. Forms part of the Shine-Dalgarno cleft in the 70S ribosome. This is Small ribosomal subunit protein uS11 from Azotobacter vinelandii (strain DJ / ATCC BAA-1303).